The chain runs to 267 residues: MRSSARGRPLQAATAFFLSLFFFLRRFERGFWLWGGDSETKVYVGNLGTGAGKGELERAFSYYGPLRTVWIARNPPGFAFVEFEDPRDAEDAVRGLDGKVICGSRVRVELSTGMPRRSRFDRPPARRPFDPNDRCYECGEKGHYAYDCHRYSRRRRSRSRSRSHSRSRGRRYSRSRSRSRGRRSRSASPRRSRSVSLRRSRSASLRRSRSGSIIGSRYFQSRSRSRSRSRSISRPRSSRSKSRSPSPKRSRSPSGSPHRSASPERMD.

An RRM domain is found at 40-113 (TKVYVGNLGT…SRVRVELSTG (74 aa)). Lysine 53 carries the N6-acetyllysine; alternate modification. Lysine 53 is covalently cross-linked (Glycyl lysine isopeptide (Lys-Gly) (interchain with G-Cter in SUMO2); alternate). Position 61 is a phosphoserine (serine 61). The segment at 110 to 127 (LSTGMPRRSRFDRPPARR) is sufficient for interaction with NXF1. The segment at 133 to 150 (DRCYECGEKGHYAYDCHR) adopts a CCHC-type zinc-finger fold. Residues 152–209 (SRRRRSRSRSRSHSRSRGRRYSRSRSRSRGRRSRSASPRRSRSVSLRRSRSASLRRSR) are compositionally biased toward basic residues. The interval 152–267 (SRRRRSRSRS…HRSASPERMD (116 aa)) is disordered. Tandem repeats lie at residues 182–189 (RRSRSASP), 190–197 (RRSRSVSL), 198–205 (RRSRSASL), and 206–213 (RRSRSGSI). The 6 X 8 AA repeats of R-R-S-R-S-X-S-X stretch occupies residues 182–255 (RRSRSASPRR…SPKRSRSPSG (74 aa)). A phosphoserine mark is found at serine 192, serine 194, and serine 196. Serine 210, serine 212, serine 221, serine 223, and serine 225 each carry phosphoserine. Basic residues predominate over residues 223–251 (SRSRSRSRSISRPRSSRSKSRSPSPKRSR). The stretch at 240–247 (SKSRSPSP) is one 5; approximate repeat. A 6; approximate repeat occupies 248-255 (KRSRSPSG). Phosphoserine occurs at positions 260 and 262.

This sequence belongs to the splicing factor SR family. Found in large molecular weight complexes containing CCNL1 and the p110 isoforms of either CDC2L1 or CDC2L2. Interacts with CCNL2 and CPSF6. Interacts with NXF1. Interacts with YTHDC1. In terms of processing, extensively phosphorylated on serine residues in the RS domain.

It localises to the nucleus. Its subcellular location is the cytoplasm. Functionally, required for pre-mRNA splicing. Represses the splicing of MAPT/Tau exon 10. May function as export adapter involved in mRNA nuclear export such as of histone H2A. Binds mRNA which is thought to be transferred to the NXF1-NXT1 heterodimer for export (TAP/NXF1 pathway); enhances NXF1-NXT1 RNA-binding activity. RNA-binding is semi-sequence specific. The polypeptide is Serine/arginine-rich splicing factor 7 (Srsf7) (Mus musculus (Mouse)).